We begin with the raw amino-acid sequence, 371 residues long: Maltose/maltodextrin import ATP-binding protein MalK (371 aa).

In terms of domain architecture, ABC transporter spans 4–234; sequence VQLQNVTKAW…PADRFVAGFI (231 aa). 36 to 43 contacts ATP; sequence GPSGCGKS.

The protein belongs to the ABC transporter superfamily. Maltooligosaccharide importer (TC 3.A.1.1.1) family. In terms of assembly, the complex is composed of two ATP-binding proteins (MalK), two transmembrane proteins (MalG and MalK) and a solute-binding protein (MalE).

Its subcellular location is the cell inner membrane. The catalysed reaction is D-maltose(out) + ATP + H2O = D-maltose(in) + ADP + phosphate + H(+). Part of the ABC transporter complex MalEFGK involved in maltose/maltodextrin import. Responsible for energy coupling to the transport system. In Escherichia coli O6:K15:H31 (strain 536 / UPEC), this protein is Maltose/maltodextrin import ATP-binding protein MalK.